The following is a 434-amino-acid chain: Probable carboxypeptidase BDBG_01803 (434 aa).

The first 20 residues, 1–20, serve as a signal peptide directing secretion; sequence MKLSHLAAALSAQLVAPVAA. N-linked (GlcNAc...) asparagine glycosylation is found at Asn-35, Asn-136, and Asn-150. Asp-160 contacts Zn(2+). Glu-192 functions as the Proton acceptor in the catalytic mechanism. Glu-193 is a binding site for Zn(2+). Asn-343 carries an N-linked (GlcNAc...) asparagine glycan.

Belongs to the peptidase M20A family. It depends on Zn(2+) as a cofactor.

It is found in the secreted. The chain is Probable carboxypeptidase BDBG_01803 from Blastomyces gilchristii (strain SLH14081) (Blastomyces dermatitidis).